We begin with the raw amino-acid sequence, 871 residues long: Dual O-methyltransferase/FAD-dependent monooxygenase CTB3 (871 aa).

The segment at 1–429 (MMQFQRDLEA…GLLTVRSAGQ (429 aa)) is O-methyltransferase. Asp-279 serves as a coordination point for S-adenosyl-L-methionine. The Proton acceptor role is filled by His-331. The FAD-dependent monooxygenase stretch occupies residues 430-871 (TALSGTNTLT…NLVDCSEFVF (442 aa)). 4 residues coordinate FAD: Glu-485, Arg-569, Asp-793, and Ala-806.

The protein in the C-terminal section; belongs to the paxM FAD-dependent monooxygenase family. It in the N-terminal section; belongs to the class I-like SAM-binding methyltransferase superfamily. Cation-independent O-methyltransferase family. COMT subfamily.

The enzyme catalyses nor-toralactone + S-adenosyl-L-methionine = toralactone + S-adenosyl-L-homocysteine + H(+). It carries out the reaction toralactone + NADH + O2 + H(+) = 1-(3,4,5-trihydroxy-7-methoxynaphthalen-2-yl)propan-2-one + CO2 + NAD(+). Its pathway is mycotoxin biosynthesis. In terms of biological role, dual O-methyltransferase/FAD-dependent monooxygenase; part of the gene cluster that mediates the biosynthesis of cercosporin, a light-activated, non-host-selective toxin. The perylenequinone chromophore of cercosporin absorbs light energy to attain an electronically-activated triplet state and produces active oxygen species such as the hydroxyl radical, superoxide, hydrogen peroxide or singlet oxygen upon reaction with oxygen molecules. These reactive oxygen species cause damage to various cellular components including lipids, proteins and nucleic acids. The first step of cercosporin biosynthesis is performed by the polyketide synthase CTB1 which catalyzes the formation of nor-toralactone. The starter unit acyltransferase (SAT) domain of CTB1 initiates polyketide extension by the selective utilization of acetyl-CoA, which is elongated to the heptaketide in the beta-ketoacyl synthase (KS) domain by successive condensations with six malonyl units introduced by the malonyl acyltransferase (MAT) domain. The product template (PT) domain catalyzes C4-C9 and C2-C11 aldol cyclizations and dehydrations to a trihydroxynaphthalene, which is thought to be delivered to the thioesterase (TE) domain for product release. The bifunctional enzyme CTB3 then methylates nor-toralactone to toralactone before conducting an unusual oxidative aromatic ring opening. The O-methyltransferase CTB2 further methylates the nascent OH-6 of the CBT3 product, blocking further oxidation at this site before the reductase CTB6 reduces the 2-oxopropyl ketone at position C7, giving naphthalene. The FAD-dependent monooxygenase CTB5 in concert with the multicopper oxidase CTB12 are responsible for homodimerization of naphthalene with CTB7 installing the dioxepine moiety, finally producing cercosporin. The fasciclin domain-containing protein CTB11 might act with CTB5 and CTB12 whereas the roles of CTB9 and CTB10 have still to be elucidated. This Cercospora beticola (Sugarbeet leaf spot fungus) protein is Dual O-methyltransferase/FAD-dependent monooxygenase CTB3.